Here is a 110-residue protein sequence, read N- to C-terminus: Translation initiation factor 1A 3 (110 aa).

A disordered region spans residues 1 to 29 (MIRKRQSGSNKSVSSGNNQEVTRVRTPRK). Over residues 7 to 18 (SGSNKSVSSGNN) the composition is skewed to low complexity. The 75-residue stretch at 22-96 (TRVRTPRKDR…SKADVIWKYT (75 aa)) folds into the S1-like domain.

It belongs to the eIF-1A family.

Functionally, seems to be required for maximal rate of protein biosynthesis. Enhances ribosome dissociation into subunits and stabilizes the binding of the initiator Met-tRNA(I) to 40 S ribosomal subunits. The chain is Translation initiation factor 1A 3 (eIF1A3) from Methanosarcina acetivorans (strain ATCC 35395 / DSM 2834 / JCM 12185 / C2A).